Here is a 66-residue protein sequence, read N- to C-terminus: Large ribosomal subunit protein bL33c (66 aa).

It belongs to the bacterial ribosomal protein bL33 family.

Its subcellular location is the plastid. It localises to the chloroplast. This Jasminum nudiflorum (Winter jasmine) protein is Large ribosomal subunit protein bL33c.